We begin with the raw amino-acid sequence, 344 residues long: MMVIRPVERSDVSALMQLASKTGGGLTSLPANEATLSARIERAIKTWQGELPKSEQGYVFVLEDSETGTVAGICAIEVAVGLNDPWYNYRVGTLVHASKELNVYNALPTLFLSNDHTGSSELCTLFLDPDWRKEGNGYLLSKSRFMFMAAFRDKFNDKVVAEMRGVIDEHGYSPFWQSLGKRFFSMDFSRVDFLCGTGQKAFIAELMPKHPIYTHFLSQEAQDVIGQVHPQTAPARAVLEKEGFRYRNYIDIFDGGPTLECDIDRVRAIRKSRLVEVAEGQPAQGDFPACLVANENYHHFRVVLARTDPATERLILTAAQLDALKCHAGDRVRLVRLCAEEKTA.

Succinyl-CoA is bound at residue Leu125. His229 (proton donor) is an active-site residue.

This sequence belongs to the arginine N-succinyltransferase family.

The catalysed reaction is succinyl-CoA + L-arginine = N(2)-succinyl-L-arginine + CoA + H(+). It functions in the pathway amino-acid degradation; L-arginine degradation via AST pathway; L-glutamate and succinate from L-arginine: step 1/5. Its function is as follows. Catalyzes the transfer of succinyl-CoA to arginine to produce N(2)-succinylarginine. The polypeptide is Arginine N-succinyltransferase (Shigella sonnei (strain Ss046)).